A 481-amino-acid polypeptide reads, in one-letter code: Glutamate--tRNA ligase (481 aa).

The 'HIGH' region signature appears at 28–38 (PSPTGFLHLGG). Residues 139–148 (RYDGTWRPEP) show a composition bias toward basic and acidic residues. Residues 139–159 (RYDGTWRPEPGKTLPPVPADR) are disordered. The 'KMSKS' region signature appears at 260-264 (KLSKR). Lys263 provides a ligand contact to ATP.

It belongs to the class-I aminoacyl-tRNA synthetase family. Glutamate--tRNA ligase type 1 subfamily. As to quaternary structure, monomer.

It is found in the cytoplasm. The enzyme catalyses tRNA(Glu) + L-glutamate + ATP = L-glutamyl-tRNA(Glu) + AMP + diphosphate. Its function is as follows. Catalyzes the attachment of glutamate to tRNA(Glu) in a two-step reaction: glutamate is first activated by ATP to form Glu-AMP and then transferred to the acceptor end of tRNA(Glu). The polypeptide is Glutamate--tRNA ligase (Bordetella bronchiseptica (strain ATCC BAA-588 / NCTC 13252 / RB50) (Alcaligenes bronchisepticus)).